Consider the following 500-residue polypeptide: Protein psiE (500 aa).

The N-terminal stretch at 1-18 (MKLISVLITFLLATVIYS) is a signal peptide. N-linked (GlcNAc...) asparagine glycosylation occurs at Asn-59. The 143-residue stretch at 114–256 (TYDTTRKIYV…KDYCGVCQGD (143 aa)) folds into the PA14 domain. N-linked (GlcNAc...) asparagine glycans are attached at residues Asn-314, Asn-341, Asn-366, Asn-420, and Asn-469.

This sequence belongs to the prespore-cell-inducing factor family.

It is found in the secreted. In Dictyostelium discoideum (Social amoeba), this protein is Protein psiE (psiE).